Here is a 523-residue protein sequence, read N- to C-terminus: ADP-ribosylation factor GTPase-activating protein 3 (523 aa).

In terms of domain architecture, Arf-GAP spans 10-126 (LAIFKRLRSV…IKTLATQATR (117 aa)). Residues 25–48 (CFDCGAKNPSWASISYGVFLCIDC) form a C4-type zinc finger. The tract at residues 162–206 (GAMQASAQPESASSTPWGLETTPEKHEGGPGQGPSVEGLNTPGKA) is disordered. A compositionally biased stretch (polar residues) spans 164–177 (MQASAQPESASSTP). Residues serine 231 and serine 241 each carry the phosphoserine modification. Positions 248-269 (QAQAVDKRKEQEDLARGAPKEE) are disordered. Phosphoserine occurs at positions 270, 274, and 331. Residues 308–424 (GFGSCRSGIS…YEPIGSTDEA (117 aa)) form a disordered region. Residues 314 to 332 (SGISHSVTSDMQTIEQESP) are compositionally biased toward polar residues. Over residues 348–361 (SYFSSSSKWSEQSS) the composition is skewed to low complexity. Serine 377 bears the Phosphoserine mark. Residues 385–396 (YWKKDSSRDPEP) show a composition bias toward basic and acidic residues. Residues serine 435, serine 458, serine 460, serine 462, serine 464, and serine 465 each carry the phosphoserine modification.

The protein resides in the cytoplasm. It is found in the golgi apparatus membrane. GAP activity stimulated by phosphatidylinositol 4,5-bisphosphate (PIP2). Its function is as follows. GTPase-activating protein (GAP) for ADP ribosylation factor 1 (ARF1). Hydrolysis of ARF1-bound GTP may lead to dissociation of coatomer from Golgi-derived membranes to allow fusion with target membranes. The protein is ADP-ribosylation factor GTPase-activating protein 3 (Arfgap3) of Mus musculus (Mouse).